The primary structure comprises 354 residues: Ferrochelatase (354 aa).

Positions 214 and 295 each coordinate Fe cation.

The protein belongs to the ferrochelatase family.

It localises to the cytoplasm. It carries out the reaction heme b + 2 H(+) = protoporphyrin IX + Fe(2+). The protein operates within porphyrin-containing compound metabolism; protoheme biosynthesis; protoheme from protoporphyrin-IX: step 1/1. Functionally, catalyzes the ferrous insertion into protoporphyrin IX. The polypeptide is Ferrochelatase (Burkholderia vietnamiensis (strain G4 / LMG 22486) (Burkholderia cepacia (strain R1808))).